The chain runs to 148 residues: SsrA-binding protein (148 aa).

Residues 123–148 are disordered; the sequence is KLHDKRETEKKRDWEREKARIMRSAT. Over residues 126-142 the composition is skewed to basic and acidic residues; it reads DKRETEKKRDWEREKAR.

This sequence belongs to the SmpB family.

The protein localises to the cytoplasm. Required for rescue of stalled ribosomes mediated by trans-translation. Binds to transfer-messenger RNA (tmRNA), required for stable association of tmRNA with ribosomes. tmRNA and SmpB together mimic tRNA shape, replacing the anticodon stem-loop with SmpB. tmRNA is encoded by the ssrA gene; the 2 termini fold to resemble tRNA(Ala) and it encodes a 'tag peptide', a short internal open reading frame. During trans-translation Ala-aminoacylated tmRNA acts like a tRNA, entering the A-site of stalled ribosomes, displacing the stalled mRNA. The ribosome then switches to translate the ORF on the tmRNA; the nascent peptide is terminated with the 'tag peptide' encoded by the tmRNA and targeted for degradation. The ribosome is freed to recommence translation, which seems to be the essential function of trans-translation. The protein is SsrA-binding protein of Burkholderia thailandensis (strain ATCC 700388 / DSM 13276 / CCUG 48851 / CIP 106301 / E264).